The chain runs to 409 residues: Elongation factor Tu, chloroplastic (409 aa).

Residues 10–214 (KPHVNIGTIG…KIDEYIPTPE (205 aa)) form the tr-type G domain. A G1 region spans residues 19–26 (GHVDHGKT). 19 to 26 (GHVDHGKT) lines the GTP pocket. A Mg(2+)-binding site is contributed by T26. A G2 region spans residues 60–64 (GITIN). The interval 81–84 (DCPG) is G3. Residues 81–85 (DCPGH) and 136–139 (NKAD) each bind GTP. The tract at residues 136–139 (NKAD) is G4. Residues 174-176 (SAL) are G5.

This sequence belongs to the TRAFAC class translation factor GTPase superfamily. Classic translation factor GTPase family. EF-Tu/EF-1A subfamily.

Its subcellular location is the plastid. It is found in the chloroplast. The enzyme catalyses GTP + H2O = GDP + phosphate + H(+). Functionally, GTP hydrolase that promotes the GTP-dependent binding of aminoacyl-tRNA to the A-site of ribosomes during protein biosynthesis. This chain is Elongation factor Tu, chloroplastic (tufA), found in Rhodomonas salina (Cryptomonas salina).